Consider the following 482-residue polypeptide: Cysteine--tRNA ligase (482 aa).

Position 29 (cysteine 29) interacts with Zn(2+). The short motif at 31-41 is the 'HIGH' region element; the sequence is VTVYDYCHLGH. Zn(2+)-binding residues include cysteine 213, histidine 238, and glutamate 242. The short motif at 275-279 is the 'KMSKS' region element; the sequence is KMSKS. ATP is bound at residue lysine 278.

Belongs to the class-I aminoacyl-tRNA synthetase family. As to quaternary structure, monomer. The cofactor is Zn(2+).

It localises to the cytoplasm. It catalyses the reaction tRNA(Cys) + L-cysteine + ATP = L-cysteinyl-tRNA(Cys) + AMP + diphosphate. The polypeptide is Cysteine--tRNA ligase (Gloeobacter violaceus (strain ATCC 29082 / PCC 7421)).